The following is a 647-amino-acid chain: RalA-binding protein 1 (647 aa).

Disordered stretches follow at residues 1 to 151 (MTEC…EKKC) and 163 to 186 (WKEK…APSL). An N-acetylthreonine modification is found at threonine 2. A compositionally biased stretch (polar residues) spans 24-33 (LTRTPSSEEI). Phosphoserine is present on residues serine 29, serine 30, and serine 34. The residue at position 44 (threonine 44) is a Phosphothreonine. Phosphoserine is present on residues serine 48 and serine 62. The segment covering 52-68 (DILHEPPDIVSDDEKDH) has biased composition (basic and acidic residues). Residue 69 to 74 (GKKKGK) coordinates ATP. Over residues 69–79 (GKKKGKFKKKE) the composition is skewed to basic residues. Phosphoserine is present on residues serine 92 and serine 93. Residues 102-118 (KMKRSKGIHVFKKPSFS) show a composition bias toward basic residues. The nuclear localization signal stretch occupies residues 102 to 119 (KMKRSKGIHVFKKPSFSK). A compositionally biased stretch (basic and acidic residues) spans 119 to 151 (KKKEKDFKIKEKPKEEKHKEEKHKEEKHKEKKC). The tract at residues 154-219 (FTAADVVKQW…PAVFRECVDY (66 aa)) is mediates association with membranes and could form transmembrane domains. The region spanning 192–380 (APFADAVERT…VLLKQVTRPL (189 aa)) is the Rho-GAP domain. A mediates interaction with RALA and RALB region spans residues 403–499 (RRQEFLLNCL…LTEQEELLAM (97 aa)). 418 to 425 (GGIKDFSK) is an ATP binding site. Phosphoserine is present on residues serine 461 and serine 463. The mediates interaction with REPS1 and REPS2 stretch occupies residues 500 to 647 (EQFLRRQIAS…PSKDRKETPI (148 aa)). Disordered regions lie at residues 525-550 (QSRQ…DEEE) and 601-647 (EQQL…ETPI). A compositionally biased stretch (acidic residues) spans 535–550 (EEYSSDSESESEDEEE). Over residues 628–647 (RAAKEQAKPSPSKDRKETPI) the composition is skewed to basic and acidic residues. Residue serine 637 is modified to Phosphoserine.

As to quaternary structure, interacts with the GTP-bound form of RALA (via effector domain); during mitosis, recruits RALBP1 to the mitochondrion where it promotes DNM1L phosphorylation and mitochondrial fission. Interacts with DNM1L; mediates its mitotic kinase cyclin B-CDK1-mediated phosphorylation during mitosis to promote mitochondrial fission. Interacts with the mitotic kinase cyclin B-CDK1 during mitosis. Interacts with the GTP-bound form of RALB (via effector domain). Interacts with REPS1; the interaction is direct and does not affect RALA-binding nor GTPase activator activity of RALBP1. Interacts with REPS2; the interaction is direct and does not affect RALA-binding nor GTPase activator activity of RALBP1. Interacts with EPN1, NUMB and TFAP2A during interphase and mitosis. Interacts with AP2M1; as part of the AP2 complex. Interacts with CDC42. Interacts with RAC1. Post-translationally, tyrosine-phosphorylated upon stimulation of cells with EGF. In terms of processing, may undergo proteolytic cleavage to give peptides which reassemble to form a transporter complex. In terms of tissue distribution, ubiquitously expressed.

It localises to the cell membrane. It is found in the cytoplasm. Its subcellular location is the cytosol. The protein resides in the cytoskeleton. The protein localises to the spindle pole. It localises to the nucleus. It is found in the mitochondrion. The catalysed reaction is an S-substituted glutathione(in) + ATP + H2O = an S-substituted glutathione(out) + ADP + phosphate + H(+). It carries out the reaction ATP + H2O + xenobioticSide 1 = ADP + phosphate + xenobioticSide 2.. It catalyses the reaction leukotriene C4(in) + ATP + H2O = leukotriene C4(out) + ADP + phosphate + H(+). In terms of biological role, multifunctional protein that functions as a downstream effector of RALA and RALB. As a GTPase-activating protein/GAP can inactivate CDC42 and RAC1 by stimulating their GTPase activity. As part of the Ral signaling pathway, may also regulate ligand-dependent EGF and insulin receptors-mediated endocytosis. During mitosis, may act as a scaffold protein in the phosphorylation of EPSIN/EPN1 by the mitotic kinase cyclin B-CDK1, preventing endocytosis during that phase of the cell cycle. During mitosis, also controls mitochondrial fission as an effector of RALA. Recruited to mitochondrion by RALA, acts as a scaffold to foster the mitotic kinase cyclin B-CDK1-mediated phosphorylation and activation of DNM1L. Functionally, could also function as a primary ATP-dependent active transporter for glutathione conjugates of electrophiles. May also actively catalyze the efflux of a wide range of substrates including xenobiotics like doxorubicin (DOX) contributing to cell multidrug resistance. The sequence is that of RalA-binding protein 1 from Rattus norvegicus (Rat).